Reading from the N-terminus, the 231-residue chain is Ribonuclease 3 (231 aa).

The RNase III domain occupies 5-134; it reads QEKLKNDYGL…FLGALFIDQG (130 aa). Residue glutamate 47 coordinates Mg(2+). The active site involves aspartate 51. Mg(2+)-binding residues include asparagine 120 and glutamate 123. The active site involves glutamate 123. In terms of domain architecture, DRBM spans 160 to 229; sequence DYKTELQEVL…AENAIKGQNH (70 aa).

The protein belongs to the ribonuclease III family. In terms of assembly, homodimer. The cofactor is Mg(2+).

It localises to the cytoplasm. It carries out the reaction Endonucleolytic cleavage to 5'-phosphomonoester.. Its function is as follows. Digests double-stranded RNA. Involved in the processing of primary rRNA transcript to yield the immediate precursors to the large and small rRNAs (23S and 16S). Processes some mRNAs, and tRNAs when they are encoded in the rRNA operon. Processes pre-crRNA and tracrRNA of type II CRISPR loci if present in the organism. The protein is Ribonuclease 3 of Lactococcus lactis subsp. cremoris (strain SK11).